Consider the following 107-residue polypeptide: Integration host factor subunit beta (107 aa).

The segment covering Pro-82 to Glu-101 has biased composition (basic and acidic residues). The interval Pro-82–Leu-107 is disordered.

Belongs to the bacterial histone-like protein family. Heterodimer of an alpha and a beta chain.

This protein is one of the two subunits of integration host factor, a specific DNA-binding protein that functions in genetic recombination as well as in transcriptional and translational control. This Paraburkholderia phytofirmans (strain DSM 17436 / LMG 22146 / PsJN) (Burkholderia phytofirmans) protein is Integration host factor subunit beta.